The following is a 444-amino-acid chain: Phosphoglucosamine mutase (444 aa).

S100 (phosphoserine intermediate) is an active-site residue. Mg(2+) is bound by residues S100, D240, D242, and D244. A Phosphoserine modification is found at S100.

The protein belongs to the phosphohexose mutase family. Mg(2+) is required as a cofactor. Post-translationally, activated by phosphorylation.

The enzyme catalyses alpha-D-glucosamine 1-phosphate = D-glucosamine 6-phosphate. Its function is as follows. Catalyzes the conversion of glucosamine-6-phosphate to glucosamine-1-phosphate. The protein is Phosphoglucosamine mutase of Desulforamulus reducens (strain ATCC BAA-1160 / DSM 100696 / MI-1) (Desulfotomaculum reducens).